A 509-amino-acid polypeptide reads, in one-letter code: DNA nucleotidylexotransferase (509 aa).

The segment at 1 to 25 (MDPLCTASSGPRKKRPRQVGASMAS) is disordered. Positions 11 to 17 (PRKKRPR) match the Nuclear localization signal motif. The BRCT domain occupies 27–124 (PHDIKFQNLV…KPVEITGKHQ (98 aa)). A mediates interaction with DNTTIP2 region spans residues 151 to 509 (SQYACQRKTT…DYIEPWERNA (359 aa)). An involved in DNA binding region spans residues 258 to 262 (VGLKT). A 2'-deoxyribonucleoside 5'-triphosphate is bound by residues 333 to 338 (GFRRGK) and 342 to 345 (HDVD). Mg(2+) is bound by residues Asp343, Asp345, and Asp433. 448-449 (GW) is an a 2'-deoxyribonucleoside 5'-triphosphate binding site.

The protein belongs to the DNA polymerase type-X family. As to quaternary structure, interacts with PRP19 and DNTTIP1. Forms a ternary complex with DNTTIP2 and core histone. Released from this complex by PCNA. Interacts with TRERF1. Mg(2+) serves as cofactor.

It localises to the nucleus. It carries out the reaction DNA(n) + a 2'-deoxyribonucleoside 5'-triphosphate = DNA(n+1) + diphosphate. Template-independent DNA polymerase which catalyzes the random addition of deoxynucleoside 5'-triphosphate to the 3'-end of a DNA initiator. One of the in vivo functions of this enzyme is the addition of nucleotides at the junction (N region) of rearranged Ig heavy chain and T-cell receptor gene segments during the maturation of B- and T-cells. This chain is DNA nucleotidylexotransferase (DNTT), found in Bos taurus (Bovine).